Reading from the N-terminus, the 277-residue chain is Large ribosomal subunit protein uL2c (277 aa).

Disordered stretches follow at residues 24 to 57 and 226 to 266; these read IVQS…RGGG and NAAD…HKYS.

Belongs to the universal ribosomal protein uL2 family. Part of the 50S ribosomal subunit.

The protein localises to the plastid. The protein resides in the chloroplast. This Zygnema circumcarinatum (Green alga) protein is Large ribosomal subunit protein uL2c (rpl2).